A 264-amino-acid polypeptide reads, in one-letter code: uncharacterized protein (264 aa).

6 residues coordinate a divalent metal cation: His-5, His-7, Glu-93, His-134, His-158, and Asp-208.

Belongs to the metallo-dependent hydrolases superfamily. TatD-type hydrolase family. The cofactor is a divalent metal cation.

This is an uncharacterized protein from Mycobacterium tuberculosis (strain ATCC 25618 / H37Rv).